The primary structure comprises 349 residues: tRNA N6-adenosine threonylcarbamoyltransferase (349 aa).

Residues His117 and His121 each contribute to the Fe cation site. Substrate is bound by residues 140–144 (LVSGG), Asp173, Gly186, and Asn284. Asp312 is a binding site for Fe cation.

The protein belongs to the KAE1 / TsaD family. It depends on Fe(2+) as a cofactor.

The protein localises to the cytoplasm. The catalysed reaction is L-threonylcarbamoyladenylate + adenosine(37) in tRNA = N(6)-L-threonylcarbamoyladenosine(37) in tRNA + AMP + H(+). Required for the formation of a threonylcarbamoyl group on adenosine at position 37 (t(6)A37) in tRNAs that read codons beginning with adenine. Is involved in the transfer of the threonylcarbamoyl moiety of threonylcarbamoyl-AMP (TC-AMP) to the N6 group of A37, together with TsaE and TsaB. TsaD likely plays a direct catalytic role in this reaction. The chain is tRNA N6-adenosine threonylcarbamoyltransferase from Psychrobacter arcticus (strain DSM 17307 / VKM B-2377 / 273-4).